Consider the following 384-residue polypeptide: Probable inactive linolenate hydroperoxide lyase (384 aa).

Cys-346 lines the heme pocket.

This sequence belongs to the cytochrome P450 family. The cofactor is heme. In terms of tissue distribution, expressed in roots, leaves, flowers and siliques.

This is Probable inactive linolenate hydroperoxide lyase from Arabidopsis thaliana (Mouse-ear cress).